Here is a 296-residue protein sequence, read N- to C-terminus: Protoheme IX farnesyltransferase (296 aa).

Helical transmembrane passes span 11-31 (PGII…AAQG), 35-55 (YPLF…GCVF), 84-104 (VTLV…YVAA), 107-127 (LAMW…SLYM), 132-152 (VYGT…GYCA), 162-182 (LILL…IAIF), 208-228 (ITLY…GGYA), 229-249 (GYKY…MALS), and 264-284 (LFVF…VDSM).

The protein belongs to the UbiA prenyltransferase family. Protoheme IX farnesyltransferase subfamily.

It localises to the cell inner membrane. It carries out the reaction heme b + (2E,6E)-farnesyl diphosphate + H2O = Fe(II)-heme o + diphosphate. It participates in porphyrin-containing compound metabolism; heme O biosynthesis; heme O from protoheme: step 1/1. Functionally, converts heme B (protoheme IX) to heme O by substitution of the vinyl group on carbon 2 of heme B porphyrin ring with a hydroxyethyl farnesyl side group. This Pectobacterium atrosepticum (strain SCRI 1043 / ATCC BAA-672) (Erwinia carotovora subsp. atroseptica) protein is Protoheme IX farnesyltransferase.